An 87-amino-acid chain; its full sequence is Small ribosomal subunit protein uS17 (87 aa).

Belongs to the universal ribosomal protein uS17 family. Part of the 30S ribosomal subunit.

One of the primary rRNA binding proteins, it binds specifically to the 5'-end of 16S ribosomal RNA. The chain is Small ribosomal subunit protein uS17 from Bacillus pumilus (strain SAFR-032).